The sequence spans 425 residues: UPF0597 protein Swoo_4889 (425 aa).

It belongs to the UPF0597 family.

This chain is UPF0597 protein Swoo_4889, found in Shewanella woodyi (strain ATCC 51908 / MS32).